Reading from the N-terminus, the 131-residue chain is Large ribosomal subunit protein bL12c (131 aa).

Positions 107–131 (QGVSKDDAEASKKQLEDAGAKVKIS) are disordered. The span at 110–131 (SKDDAEASKKQLEDAGAKVKIS) shows a compositional bias: basic and acidic residues.

It belongs to the bacterial ribosomal protein bL12 family. As to quaternary structure, homodimer. Part of the ribosomal stalk of the 50S ribosomal subunit. Forms a multimeric L10(L12)X complex, where L10 forms an elongated spine to which 2 to 4 L12 dimers bind in a sequential fashion. Binds GTP-bound translation factors.

The protein localises to the plastid. Its subcellular location is the chloroplast. Forms part of the ribosomal stalk which helps the ribosome interact with GTP-bound translation factors. Is thus essential for accurate translation. This chain is Large ribosomal subunit protein bL12c, found in Chlorella vulgaris (Green alga).